The primary structure comprises 288 residues: Thymidylate synthase (288 aa).

DUMP contacts are provided by residues R21 and 150–151; that span reads RR. C170 serves as the catalytic Nucleophile. Residues 191–194, N202, and 232–234 contribute to the dUMP site; these read RSGD and HIY. Position 194 (D194) interacts with (6R)-5,10-methylene-5,6,7,8-tetrahydrofolate. Residue A287 coordinates (6R)-5,10-methylene-5,6,7,8-tetrahydrofolate.

This sequence belongs to the thymidylate synthase family. Bacterial-type ThyA subfamily. As to quaternary structure, homodimer.

The protein resides in the cytoplasm. It catalyses the reaction dUMP + (6R)-5,10-methylene-5,6,7,8-tetrahydrofolate = 7,8-dihydrofolate + dTMP. It participates in pyrimidine metabolism; dTTP biosynthesis. Its function is as follows. Catalyzes the reductive methylation of 2'-deoxyuridine-5'-monophosphate (dUMP) to 2'-deoxythymidine-5'-monophosphate (dTMP) while utilizing 5,10-methylenetetrahydrofolate (mTHF) as the methyl donor and reductant in the reaction, yielding dihydrofolate (DHF) as a by-product. This enzymatic reaction provides an intracellular de novo source of dTMP, an essential precursor for DNA biosynthesis. The protein is Thymidylate synthase of Mesoplasma florum (strain ATCC 33453 / NBRC 100688 / NCTC 11704 / L1) (Acholeplasma florum).